Consider the following 176-residue polypeptide: MASKLLRKLAYPTLPVKGKIYDPFSKFQQNLYGGSKTEAGNNKIPKFGHKTRRVWIPNGHSKWLYSNVLEEKFHLYVTSRVLRTIDKEGGLDEYLVKSTPSRLKSLGLRGVELRALVLHKLGAKNPILEKLPSDSGAQKRYLEKVKDVVLKLNRSKKLYQQIKSLVGKERSVNTSV.

The N-terminal 8 residues, 1-8, are a transit peptide targeting the mitochondrion; the sequence is MASKLLRK.

Belongs to the bacterial ribosomal protein bL28 family. In terms of assembly, component of the mitochondrial large ribosomal subunit (mt-LSU). Mature yeast 74S mitochondrial ribosomes consist of a small (37S) and a large (54S) subunit. The 37S small subunit contains a 15S ribosomal RNA (15S mt-rRNA) and at least 32 different proteins. The 54S large subunit contains a 21S rRNA (21S mt-rRNA) and at least 45 different proteins.

The protein localises to the cytoplasm. The protein resides in the mitochondrion. In terms of biological role, component of the mitochondrial ribosome (mitoribosome), a dedicated translation machinery responsible for the synthesis of mitochondrial genome-encoded proteins, including at least some of the essential transmembrane subunits of the mitochondrial respiratory chain. The mitoribosomes are attached to the mitochondrial inner membrane and translation products are cotranslationally integrated into the membrane. In Schizosaccharomyces pombe (strain 972 / ATCC 24843) (Fission yeast), this protein is Large ribosomal subunit protein bL28m (mrpl24).